Here is a 115-residue protein sequence, read N- to C-terminus: NAD(P)H-quinone oxidoreductase subunit M (115 aa).

It belongs to the complex I NdhM subunit family. In terms of assembly, NDH-1 can be composed of about 15 different subunits; different subcomplexes with different compositions have been identified which probably have different functions.

The protein resides in the cellular thylakoid membrane. It catalyses the reaction a plastoquinone + NADH + (n+1) H(+)(in) = a plastoquinol + NAD(+) + n H(+)(out). The enzyme catalyses a plastoquinone + NADPH + (n+1) H(+)(in) = a plastoquinol + NADP(+) + n H(+)(out). In terms of biological role, NDH-1 shuttles electrons from an unknown electron donor, via FMN and iron-sulfur (Fe-S) centers, to quinones in the respiratory and/or the photosynthetic chain. The immediate electron acceptor for the enzyme in this species is believed to be plastoquinone. Couples the redox reaction to proton translocation, and thus conserves the redox energy in a proton gradient. Cyanobacterial NDH-1 also plays a role in inorganic carbon-concentration. In Prochlorococcus marinus (strain MIT 9312), this protein is NAD(P)H-quinone oxidoreductase subunit M.